The sequence spans 506 residues: Fe(3+)-transport system permease protein FbpB 2 (506 aa).

The next 12 helical transmembrane spans lie at 9-29 (LTLL…YVIL), 57-77 (LLMV…AFLL), 90-110 (VAMT…WISL), 116-136 (VFWG…YLPV), 174-194 (IGSS…AVSI), 218-238 (ALLS…EIFF), 275-295 (IFIL…IVGT), 314-334 (FIIS…LVWA), 350-370 (PYLL…YFSI), 379-399 (TFFV…QTTL), 428-448 (LTLP…FLNL), and 480-500 (AAAT…VFLL). Residues 52–233 (LSNTMLLMVC…LMAICILIVF (182 aa)) enclose the ABC transmembrane type-1 1 domain. The ABC transmembrane type-1 2 domain occupies 310-500 (FSNSFIISGL…LFSGIPVFLL (191 aa)).

The protein belongs to the binding-protein-dependent transport system permease family. FbpB subfamily. In terms of assembly, the complex is composed of two ATP-binding proteins (FbpC), two transmembrane proteins (FbpB) and a solute-binding protein (FbpA).

Its subcellular location is the cell inner membrane. In terms of biological role, part of the ABC transporter complex FbpABC (TC 3.A.1.10.1) involved in Fe(3+) ions import. Probably responsible for the translocation of the substrate across the membrane. The sequence is that of Fe(3+)-transport system permease protein FbpB 2 (fbpB2) from Haemophilus influenzae (strain ATCC 51907 / DSM 11121 / KW20 / Rd).